The following is a 71-amino-acid chain: Cell division protein ZapB (71 aa).

The stretch at 5–67 (LEVLEQLESK…RALLGKMDQM (63 aa)) forms a coiled coil.

It belongs to the ZapB family. As to quaternary structure, homodimer. The ends of the coiled-coil dimer bind to each other, forming polymers. Interacts with FtsZ.

The protein resides in the cytoplasm. In terms of biological role, non-essential, abundant cell division factor that is required for proper Z-ring formation. It is recruited early to the divisome by direct interaction with FtsZ, stimulating Z-ring assembly and thereby promoting cell division earlier in the cell cycle. Its recruitment to the Z-ring requires functional FtsA or ZipA. This chain is Cell division protein ZapB, found in Aeromonas hydrophila subsp. hydrophila (strain ATCC 7966 / DSM 30187 / BCRC 13018 / CCUG 14551 / JCM 1027 / KCTC 2358 / NCIMB 9240 / NCTC 8049).